The primary structure comprises 354 residues: Uroporphyrinogen decarboxylase (354 aa).

Substrate contacts are provided by residues 27–31 (RQAGR), D77, Y154, T209, and H327.

It belongs to the uroporphyrinogen decarboxylase family. As to quaternary structure, homodimer.

It is found in the cytoplasm. The enzyme catalyses uroporphyrinogen III + 4 H(+) = coproporphyrinogen III + 4 CO2. It participates in porphyrin-containing compound metabolism; protoporphyrin-IX biosynthesis; coproporphyrinogen-III from 5-aminolevulinate: step 4/4. Catalyzes the decarboxylation of four acetate groups of uroporphyrinogen-III to yield coproporphyrinogen-III. This Salmonella paratyphi A (strain ATCC 9150 / SARB42) protein is Uroporphyrinogen decarboxylase.